The primary structure comprises 116 residues: Nucleoid-associated protein Tfu_0045 (116 aa).

The protein belongs to the YbaB/EbfC family. As to quaternary structure, homodimer.

It localises to the cytoplasm. It is found in the nucleoid. Binds to DNA and alters its conformation. May be involved in regulation of gene expression, nucleoid organization and DNA protection. This chain is Nucleoid-associated protein Tfu_0045, found in Thermobifida fusca (strain YX).